Here is a 523-residue protein sequence, read N- to C-terminus: Fidgetin-like protein 1 (523 aa).

Residues 114-154 (PVQQAVKSRPEGQFPESRNNSTKKIDAQQYSSESSSQSGFG) form a disordered region. Residues 141–151 (QQYSSESSSQS) show a composition bias toward low complexity. ATP contacts are provided by residues Ala253 and 293–298 (GTGKTL).

The protein belongs to the AAA ATPase family. As to quaternary structure, hexamer. The cofactor is Mg(2+).

The catalysed reaction is ATP + H2O = ADP + phosphate + H(+). The chain is Fidgetin-like protein 1 from Drosophila melanogaster (Fruit fly).